The chain runs to 739 residues: Phosphoribosylformylglycinamidine synthase subunit PurL (739 aa).

H54 is a catalytic residue. 2 residues coordinate ATP: Y57 and K96. Residue E98 participates in Mg(2+) binding. Substrate-binding positions include 99 to 102 (SHNH) and R121. The Proton acceptor role is filled by H100. D122 provides a ligand contact to Mg(2+). Q245 is a substrate binding site. D273 provides a ligand contact to Mg(2+). 317 to 319 (ESQ) serves as a coordination point for substrate. 2 residues coordinate ATP: D500 and G537. N538 is a binding site for Mg(2+). S540 contacts substrate.

Belongs to the FGAMS family. As to quaternary structure, monomer. Part of the FGAM synthase complex composed of 1 PurL, 1 PurQ and 2 PurS subunits.

It localises to the cytoplasm. It carries out the reaction N(2)-formyl-N(1)-(5-phospho-beta-D-ribosyl)glycinamide + L-glutamine + ATP + H2O = 2-formamido-N(1)-(5-O-phospho-beta-D-ribosyl)acetamidine + L-glutamate + ADP + phosphate + H(+). It participates in purine metabolism; IMP biosynthesis via de novo pathway; 5-amino-1-(5-phospho-D-ribosyl)imidazole from N(2)-formyl-N(1)-(5-phospho-D-ribosyl)glycinamide: step 1/2. Its function is as follows. Part of the phosphoribosylformylglycinamidine synthase complex involved in the purines biosynthetic pathway. Catalyzes the ATP-dependent conversion of formylglycinamide ribonucleotide (FGAR) and glutamine to yield formylglycinamidine ribonucleotide (FGAM) and glutamate. The FGAM synthase complex is composed of three subunits. PurQ produces an ammonia molecule by converting glutamine to glutamate. PurL transfers the ammonia molecule to FGAR to form FGAM in an ATP-dependent manner. PurS interacts with PurQ and PurL and is thought to assist in the transfer of the ammonia molecule from PurQ to PurL. This Bacillus cereus (strain AH187) protein is Phosphoribosylformylglycinamidine synthase subunit PurL.